A 339-amino-acid polypeptide reads, in one-letter code: Anthranilate phosphoribosyltransferase (339 aa).

Residues G79, 82–83 (GD), S87, 89–92 (NIST), 107–115 (KHGNRSISS), and S119 each bind 5-phospho-alpha-D-ribose 1-diphosphate. G79 contacts anthranilate. Residue S91 participates in Mg(2+) binding. N110 lines the anthranilate pocket. R165 is an anthranilate binding site. Residues D224 and E225 each contribute to the Mg(2+) site.

It belongs to the anthranilate phosphoribosyltransferase family. As to quaternary structure, homodimer. The cofactor is Mg(2+).

The catalysed reaction is N-(5-phospho-beta-D-ribosyl)anthranilate + diphosphate = 5-phospho-alpha-D-ribose 1-diphosphate + anthranilate. Its pathway is amino-acid biosynthesis; L-tryptophan biosynthesis; L-tryptophan from chorismate: step 2/5. Its function is as follows. Catalyzes the transfer of the phosphoribosyl group of 5-phosphorylribose-1-pyrophosphate (PRPP) to anthranilate to yield N-(5'-phosphoribosyl)-anthranilate (PRA). This is Anthranilate phosphoribosyltransferase from Listeria monocytogenes serovar 1/2a (strain ATCC BAA-679 / EGD-e).